We begin with the raw amino-acid sequence, 449 residues long: Phosphoglucosamine mutase (449 aa).

The Phosphoserine intermediate role is filled by S101. Mg(2+)-binding residues include S101, D242, D244, and D246. A Phosphoserine modification is found at S101.

It belongs to the phosphohexose mutase family. Requires Mg(2+) as cofactor. Post-translationally, activated by phosphorylation.

It carries out the reaction alpha-D-glucosamine 1-phosphate = D-glucosamine 6-phosphate. In terms of biological role, catalyzes the conversion of glucosamine-6-phosphate to glucosamine-1-phosphate. The polypeptide is Phosphoglucosamine mutase (Methylocella silvestris (strain DSM 15510 / CIP 108128 / LMG 27833 / NCIMB 13906 / BL2)).